The chain runs to 119 residues: MGNMGTSELLKHIYDINLSYLLLAQRLINDEKASAMFRLGIDETMADALAQLTLPQMVKLAETNQLVCHFRFNESQTIERLTKESRVDDLQQIHTGILLSSHLLQELSSKDASPTKKRA.

Belongs to the FlhD family. In terms of assembly, homodimer; disulfide-linked. Forms a heterohexamer composed of two FlhC and four FlhD subunits. Each FlhC binds a FlhD dimer, forming a heterotrimer, and a hexamer assembles by dimerization of two heterotrimers.

Its subcellular location is the cytoplasm. Functionally, functions in complex with FlhC as a master transcriptional regulator that regulates transcription of several flagellar and non-flagellar operons by binding to their promoter region. Activates expression of class 2 flagellar genes, including fliA, which is a flagellum-specific sigma factor that turns on the class 3 genes. Also regulates genes whose products function in a variety of physiological pathways. This Serratia marcescens protein is Flagellar transcriptional regulator FlhD.